A 347-amino-acid polypeptide reads, in one-letter code: Holliday junction branch migration complex subunit RuvB (347 aa).

Residues M1–Y182 form a large ATPase domain (RuvB-L) region. Residues L21, R22, G63, K66, T67, T68, E129 to F131, R172, Y182, and R219 contribute to the ATP site. T67 serves as a coordination point for Mg(2+). The tract at residues T183 to L253 is small ATPAse domain (RuvB-S). A head domain (RuvB-H) region spans residues N256–D347. Residues R292, R311, and R316 each contribute to the DNA site.

This sequence belongs to the RuvB family. In terms of assembly, homohexamer. Forms an RuvA(8)-RuvB(12)-Holliday junction (HJ) complex. HJ DNA is sandwiched between 2 RuvA tetramers; dsDNA enters through RuvA and exits via RuvB. An RuvB hexamer assembles on each DNA strand where it exits the tetramer. Each RuvB hexamer is contacted by two RuvA subunits (via domain III) on 2 adjacent RuvB subunits; this complex drives branch migration. In the full resolvosome a probable DNA-RuvA(4)-RuvB(12)-RuvC(2) complex forms which resolves the HJ.

Its subcellular location is the cytoplasm. It catalyses the reaction ATP + H2O = ADP + phosphate + H(+). Its function is as follows. The RuvA-RuvB-RuvC complex processes Holliday junction (HJ) DNA during genetic recombination and DNA repair, while the RuvA-RuvB complex plays an important role in the rescue of blocked DNA replication forks via replication fork reversal (RFR). RuvA specifically binds to HJ cruciform DNA, conferring on it an open structure. The RuvB hexamer acts as an ATP-dependent pump, pulling dsDNA into and through the RuvAB complex. RuvB forms 2 homohexamers on either side of HJ DNA bound by 1 or 2 RuvA tetramers; 4 subunits per hexamer contact DNA at a time. Coordinated motions by a converter formed by DNA-disengaged RuvB subunits stimulates ATP hydrolysis and nucleotide exchange. Immobilization of the converter enables RuvB to convert the ATP-contained energy into a lever motion, pulling 2 nucleotides of DNA out of the RuvA tetramer per ATP hydrolyzed, thus driving DNA branch migration. The RuvB motors rotate together with the DNA substrate, which together with the progressing nucleotide cycle form the mechanistic basis for DNA recombination by continuous HJ branch migration. Branch migration allows RuvC to scan DNA until it finds its consensus sequence, where it cleaves and resolves cruciform DNA. The sequence is that of Holliday junction branch migration complex subunit RuvB from Allorhizobium ampelinum (strain ATCC BAA-846 / DSM 112012 / S4) (Agrobacterium vitis (strain S4)).